The chain runs to 122 residues: Large ribosomal subunit protein bL12 (122 aa).

It belongs to the bacterial ribosomal protein bL12 family. In terms of assembly, homodimer. Part of the ribosomal stalk of the 50S ribosomal subunit. Forms a multimeric L10(L12)X complex, where L10 forms an elongated spine to which 2 to 4 L12 dimers bind in a sequential fashion. Binds GTP-bound translation factors.

Its function is as follows. Forms part of the ribosomal stalk which helps the ribosome interact with GTP-bound translation factors. Is thus essential for accurate translation. This Buchnera aphidicola subsp. Cinara cedri (strain Cc) protein is Large ribosomal subunit protein bL12.